The chain runs to 535 residues: Beta-amylase (535 aa).

Residues Asp-51, His-91, and Asp-99 each coordinate substrate. Glu-184 (proton donor) is an active-site residue. Substrate contacts are provided by Lys-293, His-298, and Thr-340. The active-site Proton acceptor is Glu-378. Substrate contacts are provided by residues 379–380 (NA) and Arg-418. 3 tandem repeats follow at residues 489-499 (GPTGGMGGQAE), 500-510 (GPTCGMGGQVK), and 511-521 (GPTGGMGGQAE). The 4 X 11 AA tandem repeats stretch occupies residues 489 to 532 (GPTGGMGGQAEGPTCGMGGQVKGPTGGMGGQAEDPTSGIGGELP). The interval 513–535 (TGGMGGQAEDPTSGIGGELPATM) is disordered. Residues 522–532 (DPTSGIGGELP) form a 4; approximate repeat.

It belongs to the glycosyl hydrolase 14 family. In terms of assembly, monomer.

The enzyme catalyses Hydrolysis of (1-&gt;4)-alpha-D-glucosidic linkages in polysaccharides so as to remove successive maltose units from the non-reducing ends of the chains.. This is Beta-amylase (BMY1) from Hordeum vulgare (Barley).